The following is a 620-amino-acid chain: Estrogen receptor (620 aa).

Composition is skewed to polar residues over residues Met1–Ile10 and Gly101–Thr111. Disordered stretches follow at residues Met1 to Gly55 and Tyr88 to Thr111. The segment at Met1–Phe185 is modulating. 2 NR C4-type zinc fingers span residues Cys186–Cys206 and Cys222–Cys246. The segment at residues Cys186 to Met251 is a DNA-binding region (nuclear receptor). A hinge region spans residues Met252–Ile314. The tract at residues Lys286–Arg308 is disordered. The span at Thr298–Arg308 shows a compositional bias: gly residues. The 237-residue stretch at Pro315 to His551 folds into the NR LBD domain. The interval Arg558–Asp620 is disordered.

Belongs to the nuclear hormone receptor family. NR3 subfamily. Binds DNA as a homodimer. Can form a heterodimer with ER-beta. In terms of tissue distribution, widely expressed in brain, ovary, testis, and female liver.

Its subcellular location is the nucleus. The steroid hormones and their receptors are involved in the regulation of eukaryotic gene expression and affect cellular proliferation and differentiation in target tissues. In Oryzias latipes (Japanese rice fish), this protein is Estrogen receptor (esr1).